Consider the following 72-residue polypeptide: Large ribosomal subunit protein uL29 (72 aa).

The protein belongs to the universal ribosomal protein uL29 family.

This is Large ribosomal subunit protein uL29 (rpmC) from Treponema pallidum (strain Nichols).